Consider the following 561-residue polypeptide: 2-methylisocitrate lyase, mitochondrial (561 aa).

A disordered region spans residues 154-177; the sequence is KAQSMHDRKQWDTRRKMSPDERSK. A compositionally biased stretch (basic and acidic residues) spans 157–177; that stretch reads SMHDRKQWDTRRKMSPDERSK. The active site involves cysteine 228.

Belongs to the isocitrate lyase/PEP mutase superfamily. Isocitrate lyase family. It depends on Mg(2+) as a cofactor.

The protein resides in the mitochondrion matrix. The enzyme catalyses (2S,3R)-3-hydroxybutane-1,2,3-tricarboxylate = pyruvate + succinate. Its pathway is organic acid metabolism; propanoate degradation. Component of the methylcitrate cycle that catalyzes the formation of pyruvate and succinate from 2-methylisocitrate during the metabolism of endogenous propionyl-CoA. Plays an important role for growth and development, but also in antagonism, root colonization and induction of defense responses in plants. This Hypocrea atroviridis (strain ATCC 20476 / IMI 206040) (Trichoderma atroviride) protein is 2-methylisocitrate lyase, mitochondrial.